An 86-amino-acid polypeptide reads, in one-letter code: MKTLLLTLVVVTIICLDLGYTRKCLIKYSQANESSKTCPSGQLLCLKKWEIGNPSGKEVKRGCVATCPKPKKNEIIQCCAKDKCNK.

The N-terminal stretch at 1 to 21 (MKTLLLTLVVVTIICLDLGYT) is a signal peptide. Intrachain disulfides connect Cys24-Cys45, Cys38-Cys63, Cys67-Cys78, and Cys79-Cys84.

This sequence belongs to the three-finger toxin family. Short-chain subfamily. Orphan group III sub-subfamily. Expressed by the venom gland.

It localises to the secreted. The sequence is that of Short neurotoxin homolog NTL4 from Bungarus multicinctus (Many-banded krait).